A 687-amino-acid chain; its full sequence is Glycine--tRNA ligase beta subunit (687 aa).

It belongs to the class-II aminoacyl-tRNA synthetase family. Tetramer of two alpha and two beta subunits.

The protein localises to the cytoplasm. The catalysed reaction is tRNA(Gly) + glycine + ATP = glycyl-tRNA(Gly) + AMP + diphosphate. The sequence is that of Glycine--tRNA ligase beta subunit from Lactobacillus helveticus (strain DPC 4571).